An 889-amino-acid polypeptide reads, in one-letter code: Valine--tRNA ligase (889 aa).

The short motif at 50–60 (PNVTGKLHLGH) is the 'HIGH' region element. The 'KMSKS' region motif lies at 532-536 (KMSKS). Lysine 535 provides a ligand contact to ATP. A coiled-coil region spans residues 816–889 (LAELVDLDEE…QRLVDIKAEA (74 aa)).

The protein belongs to the class-I aminoacyl-tRNA synthetase family. ValS type 1 subfamily. In terms of assembly, monomer.

The protein localises to the cytoplasm. It carries out the reaction tRNA(Val) + L-valine + ATP = L-valyl-tRNA(Val) + AMP + diphosphate. Functionally, catalyzes the attachment of valine to tRNA(Val). As ValRS can inadvertently accommodate and process structurally similar amino acids such as threonine, to avoid such errors, it has a 'posttransfer' editing activity that hydrolyzes mischarged Thr-tRNA(Val) in a tRNA-dependent manner. The sequence is that of Valine--tRNA ligase from Lactiplantibacillus plantarum (strain ATCC BAA-793 / NCIMB 8826 / WCFS1) (Lactobacillus plantarum).